The sequence spans 394 residues: S-adenosylmethionine synthase 1 (394 aa).

Residue glutamate 11 participates in Mg(2+) binding. Histidine 17 lines the ATP pocket. Glutamate 45 serves as a coordination point for K(+). Residues glutamate 58 and glutamine 101 each contribute to the L-methionine site. ATP is bound by residues 169 to 171, 237 to 240, aspartate 248, 254 to 255, alanine 271, lysine 275, and lysine 279; these read DGK, SGRF, and RK. Aspartate 248 is an L-methionine binding site. Residue lysine 279 coordinates L-methionine.

It belongs to the AdoMet synthase family. In terms of assembly, homotetramer. It depends on Mn(2+) as a cofactor. Mg(2+) is required as a cofactor. The cofactor is Co(2+). K(+) serves as cofactor.

It localises to the cytoplasm. The catalysed reaction is L-methionine + ATP + H2O = S-adenosyl-L-methionine + phosphate + diphosphate. It participates in amino-acid biosynthesis; S-adenosyl-L-methionine biosynthesis; S-adenosyl-L-methionine from L-methionine: step 1/1. Catalyzes the formation of S-adenosylmethionine from methionine and ATP. The reaction comprises two steps that are both catalyzed by the same enzyme: formation of S-adenosylmethionine (AdoMet) and triphosphate, and subsequent hydrolysis of the triphosphate. The chain is S-adenosylmethionine synthase 1 (SAMS1) from Triticum monococcum (Einkorn wheat).